Here is a 225-residue protein sequence, read N- to C-terminus: PKHD-type hydroxylase YbiX (225 aa).

The region spanning 78–177 is the Fe2OG dioxygenase domain; it reads TLSTPLFNRY…RVASFMWIQS (100 aa). Residues histidine 96, aspartate 98, and histidine 158 each contribute to the Fe cation site. Residue arginine 168 coordinates 2-oxoglutarate.

Fe(2+) is required as a cofactor. L-ascorbate serves as cofactor.

This Shigella flexneri serotype 5b (strain 8401) protein is PKHD-type hydroxylase YbiX.